Here is a 294-residue protein sequence, read N- to C-terminus: Eukaryotic translation initiation factor 3 subunit G (294 aa).

Disordered regions lie at residues 1–43 and 160–211; these read MPSA…ENKI and EDDG…RDET. Over residues 194–211 the composition is skewed to basic and acidic residues; that stretch reads GANRRGETMPSRSQRDET. In terms of domain architecture, RRM spans 212–290; it reads ATIRVTNLSE…LILNVEWAKP (79 aa).

The protein belongs to the eIF-3 subunit G family. Component of the eukaryotic translation initiation factor 3 (eIF-3) complex.

It localises to the cytoplasm. In terms of biological role, RNA-binding component of the eukaryotic translation initiation factor 3 (eIF-3) complex, which is involved in protein synthesis of a specialized repertoire of mRNAs and, together with other initiation factors, stimulates binding of mRNA and methionyl-tRNAi to the 40S ribosome. The eIF-3 complex specifically targets and initiates translation of a subset of mRNAs involved in cell proliferation. This subunit can bind 18S rRNA. The chain is Eukaryotic translation initiation factor 3 subunit G from Nematostella vectensis (Starlet sea anemone).